A 204-amino-acid chain; its full sequence is Viral interleukin-6 homolog (204 aa).

Residues 1-22 (MRWFKLWSILLVGSLLVSGTRG) form the signal peptide.

Belongs to the IL-6 superfamily. In terms of assembly, interacts with host IL6ST.

Initiates signal transduction through binding to interleukin-6 receptor subunit beta IL6ST, independently of the cognate IL6 receptor IL6R. In infected primary effusion lymphoma cells, promotes proliferation of cells, protects them from apoptosis, and promotes immune evasion of interferon activity. Also drives blood to lymphatic endothelial cell differentiation. The protein is Viral interleukin-6 homolog (K2) of Homo sapiens (Human).